The following is a 350-amino-acid chain: UDP-3-O-acylglucosamine N-acyltransferase (350 aa).

Histidine 244 functions as the Proton acceptor in the catalytic mechanism.

The protein belongs to the transferase hexapeptide repeat family. LpxD subfamily. As to quaternary structure, homotrimer.

The enzyme catalyses a UDP-3-O-[(3R)-3-hydroxyacyl]-alpha-D-glucosamine + a (3R)-hydroxyacyl-[ACP] = a UDP-2-N,3-O-bis[(3R)-3-hydroxyacyl]-alpha-D-glucosamine + holo-[ACP] + H(+). It participates in bacterial outer membrane biogenesis; LPS lipid A biosynthesis. In terms of biological role, catalyzes the N-acylation of UDP-3-O-acylglucosamine using 3-hydroxyacyl-ACP as the acyl donor. Is involved in the biosynthesis of lipid A, a phosphorylated glycolipid that anchors the lipopolysaccharide to the outer membrane of the cell. The sequence is that of UDP-3-O-acylglucosamine N-acyltransferase from Janthinobacterium sp. (strain Marseille) (Minibacterium massiliensis).